Here is a 213-residue protein sequence, read N- to C-terminus: Protein RCR1 (213 aa).

Topologically, residues methionine 1–serine 39 are lumenal. A helical transmembrane segment spans residues glycine 40–alanine 62. The Cytoplasmic portion of the chain corresponds to asparagine 63–serine 213. Residues valine 104 to tyrosine 107 carry the PY motif motif. The disordered stretch occupies residues glutamate 190–serine 213. Basic and acidic residues predominate over residues proline 203 to serine 213.

In terms of assembly, interacts with PMT4 and WW domain of RSP5.

It localises to the endoplasmic reticulum membrane. Functionally, regulates chitin deposition in the cell wall. The sequence is that of Protein RCR1 (RCR1) from Saccharomyces cerevisiae (strain ATCC 204508 / S288c) (Baker's yeast).